A 333-amino-acid polypeptide reads, in one-letter code: Fructose-1,6-bisphosphatase class 1 1 (333 aa).

Glu81, Asp100, Leu102, and Asp103 together coordinate Mg(2+). Substrate-binding positions include 103–106 (DGSS) and Asn191. Glu263 provides a ligand contact to Mg(2+).

It belongs to the FBPase class 1 family. Homotetramer. The cofactor is Mg(2+).

Its subcellular location is the cytoplasm. It catalyses the reaction beta-D-fructose 1,6-bisphosphate + H2O = beta-D-fructose 6-phosphate + phosphate. Its pathway is carbohydrate biosynthesis; Calvin cycle. The polypeptide is Fructose-1,6-bisphosphatase class 1 1 (Cereibacter sphaeroides (strain ATCC 17023 / DSM 158 / JCM 6121 / CCUG 31486 / LMG 2827 / NBRC 12203 / NCIMB 8253 / ATH 2.4.1.) (Rhodobacter sphaeroides)).